Here is a 493-residue protein sequence, read N- to C-terminus: Cyclin-dependent kinase-like 2 (493 aa).

Residues 4 to 287 (YENLGLVGEG…CAELLHHDFF (284 aa)) form the Protein kinase domain. ATP contacts are provided by residues 10 to 18 (VGEGSYGMV) and K33. A [NKR]KIAxRE motif is present at residues 45–51 (KKIAMRE). The active-site Proton acceptor is D126. 2 disordered regions span residues 311–338 (VSLS…KTLV) and 363–384 (GEKA…SRTS). Residues 320–336 (RKKEKEKDDSLGEERKT) show a composition bias toward basic and acidic residues.

Belongs to the protein kinase superfamily. CMGC Ser/Thr protein kinase family. CDC2/CDKX subfamily.

It is found in the cytoplasm. The protein resides in the nucleus. It carries out the reaction L-seryl-[protein] + ATP = O-phospho-L-seryl-[protein] + ADP + H(+). The enzyme catalyses L-threonyl-[protein] + ATP = O-phospho-L-threonyl-[protein] + ADP + H(+). This Pongo abelii (Sumatran orangutan) protein is Cyclin-dependent kinase-like 2.